Here is a 513-residue protein sequence, read N- to C-terminus: Xylose import ATP-binding protein XylG (513 aa).

2 ABC transporter domains span residues 5 to 242 and 259 to 505; these read LEMK…VGRE and LRIE…LRSE. 37 to 44 is a binding site for ATP; that stretch reads GENGSGKS.

This sequence belongs to the ABC transporter superfamily. Xylose importer (TC 3.A.1.2.4) family. The complex is composed of two ATP-binding proteins (XylG), two transmembrane proteins (XylH) and a solute-binding protein (XylF).

The protein localises to the cell inner membrane. The enzyme catalyses D-xylose(out) + ATP + H2O = D-xylose(in) + ADP + phosphate + H(+). Part of the ABC transporter complex XylFGH involved in xylose import. Responsible for energy coupling to the transport system. This is Xylose import ATP-binding protein XylG from Escherichia coli (strain UTI89 / UPEC).